The primary structure comprises 77 residues: U8-hexatoxin-Mg1a (77 aa).

A signal peptide spans 1–22 (MKVFSFTIGLVVIISLFAFALA). Residues 23-43 (YDEETDLMKKLVEMERAIEQR) constitute a propeptide that is removed on maturation. Disulfide bonds link C46-C60, C53-C65, and C59-C76.

Expressed by the venom gland.

The protein resides in the secreted. In terms of biological role, intrathorax injection into crickets causes paralysis prolonged for more than 60 minutes, followed by recovery. The chain is U8-hexatoxin-Mg1a from Macrothele gigas (Japanese funnel web spider).